The following is a 236-amino-acid chain: Phosphoribosylaminoimidazole-succinocarboxamide synthase (236 aa).

It belongs to the SAICAR synthetase family.

It catalyses the reaction 5-amino-1-(5-phospho-D-ribosyl)imidazole-4-carboxylate + L-aspartate + ATP = (2S)-2-[5-amino-1-(5-phospho-beta-D-ribosyl)imidazole-4-carboxamido]succinate + ADP + phosphate + 2 H(+). It participates in purine metabolism; IMP biosynthesis via de novo pathway; 5-amino-1-(5-phospho-D-ribosyl)imidazole-4-carboxamide from 5-amino-1-(5-phospho-D-ribosyl)imidazole-4-carboxylate: step 1/2. The polypeptide is Phosphoribosylaminoimidazole-succinocarboxamide synthase (Wolinella succinogenes (strain ATCC 29543 / DSM 1740 / CCUG 13145 / JCM 31913 / LMG 7466 / NCTC 11488 / FDC 602W) (Vibrio succinogenes)).